The primary structure comprises 98 residues: NADH-ubiquinone oxidoreductase chain 4L (98 aa).

Helical transmembrane passes span M1 to M21, S29 to L49, and I61 to V81.

The protein belongs to the complex I subunit 4L family. In terms of assembly, core subunit of respiratory chain NADH dehydrogenase (Complex I) which is composed of 45 different subunits.

Its subcellular location is the mitochondrion inner membrane. The enzyme catalyses a ubiquinone + NADH + 5 H(+)(in) = a ubiquinol + NAD(+) + 4 H(+)(out). Core subunit of the mitochondrial membrane respiratory chain NADH dehydrogenase (Complex I) which catalyzes electron transfer from NADH through the respiratory chain, using ubiquinone as an electron acceptor. Part of the enzyme membrane arm which is embedded in the lipid bilayer and involved in proton translocation. The protein is NADH-ubiquinone oxidoreductase chain 4L (MT-ND4L) of Elaphodus cephalophus (Tufted deer).